The primary structure comprises 274 residues: Probable formate transporter (274 aa).

Helical transmembrane passes span 31 to 51 (IVLS…AEVV), 62 to 82 (AGLV…LVVI), 118 to 138 (VFNL…TGIL), 176 to 196 (AFWR…LAIA), 200 to 220 (IIGK…IGFE), 226 to 246 (MFFI…FFMN), and 248 to 268 (LIPV…CLYW).

This sequence belongs to the FNT transporter (TC 1.A.16) family.

Its subcellular location is the cell membrane. Its function is as follows. May act as a formate transporter. In Methanothermobacter thermautotrophicus (Methanobacterium thermoformicicum), this protein is Probable formate transporter (fdhC).